Here is an 86-residue protein sequence, read N- to C-terminus: Long neurotoxin homolog (86 aa).

Residues 1–21 form the signal peptide; that stretch reads MKTLLLTLVVVTIVCLALGYT. 5 disulfide bridges follow: C24–C45, C27–C32, C38–C63, C67–C78, and C79–C84.

Belongs to the three-finger toxin family. Ancestral subfamily. Orphan group II sub-subfamily. As to expression, expressed by the venom gland.

The protein resides in the secreted. Functionally, binds with low affinity and weakly inhibits muscle nicotinic acetylcholine receptor (nAChR). This is Long neurotoxin homolog from Naja atra (Chinese cobra).